The following is a 158-amino-acid chain: GTP-dependent dephospho-CoA kinase (158 aa).

Positions 35, 36, 37, 54, 56, 109, and 132 each coordinate GTP.

It belongs to the GTP-dependent DPCK family.

It catalyses the reaction 3'-dephospho-CoA + GTP = GDP + CoA + H(+). It functions in the pathway cofactor biosynthesis; coenzyme A biosynthesis. In terms of biological role, catalyzes the GTP-dependent phosphorylation of the 3'-hydroxyl group of dephosphocoenzyme A to form coenzyme A (CoA). This Methanocaldococcus jannaschii (strain ATCC 43067 / DSM 2661 / JAL-1 / JCM 10045 / NBRC 100440) (Methanococcus jannaschii) protein is GTP-dependent dephospho-CoA kinase.